A 186-amino-acid polypeptide reads, in one-letter code: Ribosome-recycling factor (186 aa).

It belongs to the RRF family.

It is found in the cytoplasm. In terms of biological role, responsible for the release of ribosomes from messenger RNA at the termination of protein biosynthesis. May increase the efficiency of translation by recycling ribosomes from one round of translation to another. In Nitratidesulfovibrio vulgaris (strain DP4) (Desulfovibrio vulgaris), this protein is Ribosome-recycling factor.